The primary structure comprises 130 residues: Small ribosomal subunit protein uS11 (130 aa).

The interval 108 to 130 (IEDVTPIPHDGTGRPGGKRGRRV) is disordered.

The protein belongs to the universal ribosomal protein uS11 family. In terms of assembly, part of the 30S ribosomal subunit.

Located on the platform of the 30S subunit. This is Small ribosomal subunit protein uS11 from Methanothermobacter thermautotrophicus (strain ATCC 29096 / DSM 1053 / JCM 10044 / NBRC 100330 / Delta H) (Methanobacterium thermoautotrophicum).